The chain runs to 280 residues: MKYIGAHVSASGGVENAVLRAVEIGANAFALFTKNQRQWKALALKADTIEKFKRFCKAHQFSPEHILPHDSYLINLGNPEAENLAKSREAFIDEMERANQLGLKLLNFHPSAHLNKISESECLARIAESINIAVDKVPNVIAVIENTAGQGSNLGYRFEHLAEIIDQVEDKNRVGVCLDTCHLFSAGYDISSLESCEQTFSEFERTVGFQYLRGMHLNGSKTPLGSRVDRHHTLREGTIGTDFCKFIMQDDRFDNIPLILETIQPEIWTEEIKFLRTLAK.

Zn(2+)-binding residues include His69, His109, Glu145, Asp179, His182, His216, Asp229, His231, and Glu261.

This sequence belongs to the AP endonuclease 2 family. It depends on Zn(2+) as a cofactor.

The catalysed reaction is Endonucleolytic cleavage to 5'-phosphooligonucleotide end-products.. In terms of biological role, endonuclease IV plays a role in DNA repair. It cleaves phosphodiester bonds at apurinic or apyrimidinic (AP) sites, generating a 3'-hydroxyl group and a 5'-terminal sugar phosphate. This is Probable endonuclease 4 from Actinobacillus pleuropneumoniae serotype 5b (strain L20).